Consider the following 793-residue polypeptide: Pentatricopeptide repeat-containing protein At1g03100, mitochondrial (793 aa).

The transit peptide at 1-87 (MFSLRKTKLQ…REAISSISGS (87 aa)) directs the protein to the mitochondrion. 11 PPR repeats span residues 257-291 (NTQV…GVKA), 292-322 (DANL…IDEA), 330-364 (FWQF…GKVA), 458-492 (TEEI…DSPV), 495-529 (DNSM…GVRT), 530-564 (GSSV…GIQL), 565-599 (DSSC…KILR), 601-631 (GNQK…IREV), 637-671 (GVHD…GHSP), 672-707 (NAQT…AAAT), and 713-747 (DQEL…NMFV).

Belongs to the PPR family. P subfamily.

It is found in the mitochondrion. The chain is Pentatricopeptide repeat-containing protein At1g03100, mitochondrial from Arabidopsis thaliana (Mouse-ear cress).